A 480-amino-acid polypeptide reads, in one-letter code: Ribulose bisphosphate carboxylase large chain (480 aa).

The propeptide occupies 1-2; sequence MS. Residue Pro3 is modified to N-acetylproline. Lys14 carries the post-translational modification N6,N6,N6-trimethyllysine. 2 residues coordinate substrate: Asn123 and Thr173. The Proton acceptor role is filled by Lys175. Substrate is bound at residue Lys177. 3 residues coordinate Mg(2+): Lys201, Asp203, and Glu204. Lys201 carries the N6-carboxylysine modification. The active-site Proton acceptor is His294. Residues Arg295, His327, and Ser379 each contribute to the substrate site.

It belongs to the RuBisCO large chain family. Type I subfamily. As to quaternary structure, heterohexadecamer of 8 large chains and 8 small chains; disulfide-linked. The disulfide link is formed within the large subunit homodimers. Mg(2+) serves as cofactor. Post-translationally, the disulfide bond which can form in the large chain dimeric partners within the hexadecamer appears to be associated with oxidative stress and protein turnover.

Its subcellular location is the plastid. The protein resides in the chloroplast. It carries out the reaction 2 (2R)-3-phosphoglycerate + 2 H(+) = D-ribulose 1,5-bisphosphate + CO2 + H2O. The enzyme catalyses D-ribulose 1,5-bisphosphate + O2 = 2-phosphoglycolate + (2R)-3-phosphoglycerate + 2 H(+). RuBisCO catalyzes two reactions: the carboxylation of D-ribulose 1,5-bisphosphate, the primary event in carbon dioxide fixation, as well as the oxidative fragmentation of the pentose substrate in the photorespiration process. Both reactions occur simultaneously and in competition at the same active site. In Gossypium barbadense (Sea Island cotton), this protein is Ribulose bisphosphate carboxylase large chain.